A 488-amino-acid polypeptide reads, in one-letter code: Leucine-rich repeat-containing protein 74A (488 aa).

LRR repeat units follow at residues 134 to 155 (AVTK…SLVE), 162 to 182 (YLQE…RIIS), 191 to 212 (SIWS…LLCQ), 219 to 239 (QIKK…EHLG), 247 to 268 (GLTS…ALCN), 275 to 296 (TLTK…ALGE), 303 to 324 (CLVY…KISK), and 331 to 351 (SLRV…ILLI).

This is Leucine-rich repeat-containing protein 74A from Homo sapiens (Human).